Reading from the N-terminus, the 266-residue chain is Putative cysteine-rich repeat secretory protein 20 (266 aa).

Residues 1–33 form the signal peptide; the sequence is MYFPPSSVPKRLVLVHISAVVAIKLLLIRSVSS. 2 Gnk2-homologous domains span residues 40 to 142 and 148 to 261; these read YLQH…SIRN and YNNN…LYPF.

This sequence belongs to the cysteine-rich repeat secretory protein family.

It localises to the secreted. The sequence is that of Putative cysteine-rich repeat secretory protein 20 (CRRSP20) from Arabidopsis thaliana (Mouse-ear cress).